An 834-amino-acid chain; its full sequence is Leucine--tRNA ligase (834 aa).

The short motif at 36 to 46 is the 'HIGH' region element; the sequence is PYPSGKIHVGH. The 'KMSKS' region signature appears at 602–606; it reads KMSKS. K605 contributes to the ATP binding site.

This sequence belongs to the class-I aminoacyl-tRNA synthetase family.

The protein resides in the cytoplasm. The enzyme catalyses tRNA(Leu) + L-leucine + ATP = L-leucyl-tRNA(Leu) + AMP + diphosphate. This chain is Leucine--tRNA ligase, found in Rickettsia canadensis (strain McKiel).